A 593-amino-acid chain; its full sequence is NADH-quinone oxidoreductase subunit C/D (593 aa).

The interval 1 to 184 (MTADNALYIP…DPYSLTLAKQ (184 aa)) is NADH dehydrogenase I subunit C. Residues 208 to 593 (DYMFLNLGPN…IDFVMADVDR (386 aa)) form an NADH dehydrogenase I subunit D region.

The protein in the N-terminal section; belongs to the complex I 30 kDa subunit family. This sequence in the C-terminal section; belongs to the complex I 49 kDa subunit family. As to quaternary structure, NDH-1 is composed of 13 different subunits. Subunits NuoB, CD, E, F, and G constitute the peripheral sector of the complex.

The protein resides in the cell inner membrane. It carries out the reaction a quinone + NADH + 5 H(+)(in) = a quinol + NAD(+) + 4 H(+)(out). NDH-1 shuttles electrons from NADH, via FMN and iron-sulfur (Fe-S) centers, to quinones in the respiratory chain. The immediate electron acceptor for the enzyme in this species is believed to be ubiquinone. Couples the redox reaction to proton translocation (for every two electrons transferred, four hydrogen ions are translocated across the cytoplasmic membrane), and thus conserves the redox energy in a proton gradient. The sequence is that of NADH-quinone oxidoreductase subunit C/D from Pseudomonas savastanoi pv. phaseolicola (strain 1448A / Race 6) (Pseudomonas syringae pv. phaseolicola (strain 1448A / Race 6)).